The sequence spans 24 residues: uncharacterized protein (24 aa).

This is an uncharacterized protein from Saccharomyces cerevisiae (strain ATCC 204508 / S288c) (Baker's yeast).